Consider the following 150-residue polypeptide: Large ribosomal subunit protein uL13 (150 aa).

Positions Glu130 to Lys150 are disordered. Positions Ser134–Lys150 are enriched in polar residues.

This sequence belongs to the universal ribosomal protein uL13 family. In terms of assembly, part of the 50S ribosomal subunit.

Functionally, this protein is one of the early assembly proteins of the 50S ribosomal subunit, although it is not seen to bind rRNA by itself. It is important during the early stages of 50S assembly. In Prochlorococcus marinus (strain SARG / CCMP1375 / SS120), this protein is Large ribosomal subunit protein uL13.